The following is a 221-amino-acid chain: Large ribosomal subunit protein uL4 (221 aa).

The tract at residues 47-77 (GTASTKTRGEVSGGGRKPWIQKHTGRARQGS) is disordered.

The protein belongs to the universal ribosomal protein uL4 family. Part of the 50S ribosomal subunit.

In terms of biological role, one of the primary rRNA binding proteins, this protein initially binds near the 5'-end of the 23S rRNA. It is important during the early stages of 50S assembly. It makes multiple contacts with different domains of the 23S rRNA in the assembled 50S subunit and ribosome. Forms part of the polypeptide exit tunnel. The sequence is that of Large ribosomal subunit protein uL4 from Thermosipho melanesiensis (strain DSM 12029 / CIP 104789 / BI429).